Consider the following 199-residue polypeptide: Potassium-transporting ATPase KdpC subunit (199 aa).

Residues 21 to 43 form a helical membrane-spanning segment; sequence LALLFVCGVVYTGTVTQLGGALF.

The protein belongs to the KdpC family. As to quaternary structure, the system is composed of three essential subunits: KdpA, KdpB and KdpC.

It localises to the cell inner membrane. Its function is as follows. Part of the high-affinity ATP-driven potassium transport (or Kdp) system, which catalyzes the hydrolysis of ATP coupled with the electrogenic transport of potassium into the cytoplasm. This subunit acts as a catalytic chaperone that increases the ATP-binding affinity of the ATP-hydrolyzing subunit KdpB by the formation of a transient KdpB/KdpC/ATP ternary complex. The protein is Potassium-transporting ATPase KdpC subunit of Shewanella putrefaciens (strain CN-32 / ATCC BAA-453).